Consider the following 193-residue polypeptide: Ion-translocating oxidoreductase complex subunit A (193 aa).

A run of 6 helical transmembrane segments spans residues 5–25 (FFFI…FLGL), 47–67 (FVVV…LLPF), 72–92 (LRII…EIIL), 102–122 (ILGI…IPLF), 134–154 (ILYA…FSSI), and 171–191 (PIVL…KGLV).

Belongs to the NqrDE/RnfAE family. The complex is composed of six subunits: RnfA, RnfB, RnfC, RnfD, RnfE and RnfG.

The protein localises to the cell inner membrane. Functionally, part of a membrane-bound complex that couples electron transfer with translocation of ions across the membrane. The polypeptide is Ion-translocating oxidoreductase complex subunit A (Buchnera aphidicola subsp. Schizaphis graminum (strain Sg)).